We begin with the raw amino-acid sequence, 214 residues long: CASP-like protein 0U1 (214 aa).

Residues 1 to 82 lie on the Cytoplasmic side of the membrane; sequence MATSEAPLLK…GFTSFYQFKG (82 aa). The chain crosses the membrane as a helical span at residues 83 to 103; it reads VVGVYAAFWVYTVLLIGLYLF. At 104 to 112 the chain is on the extracellular side; the sequence is SRGPPPGTE. The chain crosses the membrane as a helical span at residues 113-133; that stretch reads FVVHALFTLCMIAFVSLSVIS. Topologically, residues 134–153 are cytoplasmic; sequence CTSTVIESDYSVCKNAAYAK. The helical transmembrane segment at 154 to 174 threads the bilayer; it reads ASLVFAALVVVLNCATCAFVF. The Extracellular segment spans residues 175–214; that stretch reads KQWRSLQFVGMPENFRPFGRHRHKHGHHAGDADDAIPTHP. Positions 194–214 are disordered; sequence RHRHKHGHHAGDADDAIPTHP.

The protein belongs to the Casparian strip membrane proteins (CASP) family. In terms of assembly, homodimer and heterodimers.

It is found in the cell membrane. This is CASP-like protein 0U1 from Ostreococcus tauri.